We begin with the raw amino-acid sequence, 140 residues long: L-fucose mutarotase (140 aa).

The Proton donor role is filled by His22. Substrate is bound by residues Asp30, Arg107, and 129–131 (YGN).

This sequence belongs to the RbsD / FucU family. FucU mutarotase subfamily. As to quaternary structure, homodecamer.

The protein localises to the cytoplasm. The catalysed reaction is alpha-L-fucose = beta-L-fucose. It functions in the pathway carbohydrate metabolism; L-fucose metabolism. Involved in the anomeric conversion of L-fucose. The protein is L-fucose mutarotase of Salmonella typhimurium (strain LT2 / SGSC1412 / ATCC 700720).